A 245-amino-acid chain; its full sequence is Adenosylcobinamide-GDP ribazoletransferase (245 aa).

Transmembrane regions (helical) follow at residues 31-51 (FGRA…VLYA), 61-81 (PLLQ…ALHL), 113-133 (VAVV…AALL), 138-158 (AGLL…LFLT), and 192-212 (LAFG…FAWL).

This sequence belongs to the CobS family. Requires Mg(2+) as cofactor.

The protein resides in the cell inner membrane. The enzyme catalyses alpha-ribazole + adenosylcob(III)inamide-GDP = adenosylcob(III)alamin + GMP + H(+). It carries out the reaction alpha-ribazole 5'-phosphate + adenosylcob(III)inamide-GDP = adenosylcob(III)alamin 5'-phosphate + GMP + H(+). It functions in the pathway cofactor biosynthesis; adenosylcobalamin biosynthesis; adenosylcobalamin from cob(II)yrinate a,c-diamide: step 7/7. In terms of biological role, joins adenosylcobinamide-GDP and alpha-ribazole to generate adenosylcobalamin (Ado-cobalamin). Also synthesizes adenosylcobalamin 5'-phosphate from adenosylcobinamide-GDP and alpha-ribazole 5'-phosphate. The chain is Adenosylcobinamide-GDP ribazoletransferase from Pseudomonas aeruginosa (strain UCBPP-PA14).